We begin with the raw amino-acid sequence, 141 residues long: Hemoglobin subunit alpha (141 aa).

Positions 1–141 (VLSSKDKANI…VSTVLTSKYR (141 aa)) constitute a Globin domain. S3 carries the post-translational modification Phosphoserine. An N6-succinyllysine mark is found at K7 and K11. Residue K16 is modified to N6-acetyllysine; alternate. The residue at position 16 (K16) is an N6-succinyllysine; alternate. Position 24 is a phosphotyrosine (Y24). Residue K40 is modified to N6-succinyllysine. S49 carries the phosphoserine modification. An O2-binding site is contributed by H58. H87 serves as a coordination point for heme b. S102 carries the post-translational modification Phosphoserine. The residue at position 108 (T108) is a Phosphothreonine. S124 bears the Phosphoserine mark. Residues T134 and T137 each carry the phosphothreonine modification. Position 138 is a phosphoserine (S138).

It belongs to the globin family. As to quaternary structure, heterotetramer of two alpha chains and two beta chains. In terms of tissue distribution, red blood cells.

Its function is as follows. Involved in oxygen transport from the lung to the various peripheral tissues. Functionally, hemopressin acts as an antagonist peptide of the cannabinoid receptor CNR1. Hemopressin-binding efficiently blocks cannabinoid receptor CNR1 and subsequent signaling. The sequence is that of Hemoglobin subunit alpha (HBA) from Vicugna pacos (Alpaca).